A 524-amino-acid polypeptide reads, in one-letter code: Capsid scaffolding protein (524 aa).

Catalysis depends on charge relay system residues His-47, Ser-116, and His-137. The tract at residues 268–287 (DDLIPVPRSAFLNMLESTVS) is interaction with pAP. A Nuclear localization signal motif is present at residues 359-365 (RPRKRAR). The disordered stretch occupies residues 359 to 378 (RPRKRAREDPEDEVSFPGEE). Positions 504 to 524 (AETSKAATLQKLFCDEMLSKQ) are interaction with major capsid protein.

The protein belongs to the herpesviridae capsid scaffolding protein family. As to quaternary structure, homomultimer. Interacts with major capsid protein. In terms of assembly, exists in a monomer-dimer equilibrium with the dimer being the active species. In terms of processing, capsid scaffolding protein is cleaved by assemblin after formation of the spherical procapsid. As a result, the capsid obtains its mature, icosahedral shape. Cleavages occur at two or more sites: release (R-site) and maturation (M-site).

Its subcellular location is the host cytoplasm. The protein resides in the host nucleus. The enzyme catalyses Cleaves -Ala-|-Ser- and -Ala-|-Ala- bonds in the scaffold protein.. Acts as a scaffold protein by binding major capsid protein in the cytoplasm, inducing the nuclear localization of both proteins. Multimerizes in the nucleus such as major capsid protein forms the icosahedral T=16 capsid. Autocatalytic cleavage releases the assembly protein, and subsequently abolishes interaction with major capsid protein. Cleavages products are evicted from the capsid before or during DNA packaging. Its function is as follows. Protease that plays an essential role in virion assembly within the nucleus. Catalyzes the cleavage of the assembly protein after formation of the spherical procapsid. By that cleavage, the capsid matures and gains its icosahedral shape. The cleavage sites seem to include -Ala-Ser-, -Ala-Ala-, as well as Ala-Thr bonds. Assemblin and cleavages products are evicted from the capsid before or during DNA packaging. In terms of biological role, plays a major role in capsid assembly. Acts as a scaffold protein by binding major capsid protein. Multimerizes in the nucleus such as major capsid protein forms the icosahedral T=16 capsid. Cleaved by assemblin after capsid completion. The cleavages products are evicted from the capsid before or during DNA packaging. The chain is Capsid scaffolding protein (17) from Connochaetes taurinus (Blue wildebeest).